We begin with the raw amino-acid sequence, 464 residues long: L-2-hydroxyglutarate dehydrogenase, mitochondrial (464 aa).

Residues 1 to 52 constitute a mitochondrion transit peptide; the sequence is MWPTLRYVGGVCGLARYCVAGGFLRASGPASGVPGLLCGGGRRSSSTSSFDI. An N6-acetyllysine mark is found at Lys105 and Lys174.

It belongs to the L2HGDH family. The cofactor is FAD.

The protein localises to the mitochondrion. It carries out the reaction (S)-2-hydroxyglutarate + A = 2-oxoglutarate + AH2. The sequence is that of L-2-hydroxyglutarate dehydrogenase, mitochondrial (L2hgdh) from Mus musculus (Mouse).